We begin with the raw amino-acid sequence, 128 residues long: Holo-[acyl-carrier-protein] synthase (128 aa).

Positions 9 and 56 each coordinate Mg(2+).

This sequence belongs to the P-Pant transferase superfamily. AcpS family. It depends on Mg(2+) as a cofactor.

Its subcellular location is the cytoplasm. It catalyses the reaction apo-[ACP] + CoA = holo-[ACP] + adenosine 3',5'-bisphosphate + H(+). In terms of biological role, transfers the 4'-phosphopantetheine moiety from coenzyme A to a Ser of acyl-carrier-protein. The chain is Holo-[acyl-carrier-protein] synthase from Pelagibacter ubique (strain HTCC1062).